The following is a 394-amino-acid chain: Dihydroorotase (394 aa).

Zn(2+) contacts are provided by histidine 15, histidine 17, lysine 98, histidine 135, histidine 175, and aspartate 245. Residue lysine 98 is modified to N6-carboxylysine.

It belongs to the metallo-dependent hydrolases superfamily. DHOase family. Class II DHOase subfamily. Zn(2+) is required as a cofactor.

The catalysed reaction is (S)-dihydroorotate + H2O = N-carbamoyl-L-aspartate + H(+). Its pathway is pyrimidine metabolism; UMP biosynthesis via de novo pathway; (S)-dihydroorotate from bicarbonate: step 3/3. The chain is Dihydroorotase (PYR3) from Mycosarcoma maydis (Corn smut fungus).